Reading from the N-terminus, the 289-residue chain is NAD kinase (289 aa).

Asp-68 acts as the Proton acceptor in catalysis. NAD(+) contacts are provided by residues 68 to 69 (DG), Lys-73, 142 to 143 (ND), Arg-153, Asp-172, 183 to 188 (TAYSLS), and Gln-243.

This sequence belongs to the NAD kinase family. A divalent metal cation serves as cofactor.

Its subcellular location is the cytoplasm. It catalyses the reaction NAD(+) + ATP = ADP + NADP(+) + H(+). Involved in the regulation of the intracellular balance of NAD and NADP, and is a key enzyme in the biosynthesis of NADP. Catalyzes specifically the phosphorylation on 2'-hydroxyl of the adenosine moiety of NAD to yield NADP. The chain is NAD kinase from Acetivibrio thermocellus (strain ATCC 27405 / DSM 1237 / JCM 9322 / NBRC 103400 / NCIMB 10682 / NRRL B-4536 / VPI 7372) (Clostridium thermocellum).